Here is a 154-residue protein sequence, read N- to C-terminus: Calmodulin-like protein 4 (154 aa).

4 EF-hand domains span residues 7-42, 43-78, 80-115, and 116-151; these read EQMVAFQEAFLLFDKNGDGCITLEELAAVTRSLGLE, PTDQELNDMMREVDTDGNGIIDFQEFLSLIARKMKD, DGDEELKEAFEVLDKDQNGFISPTELRTVMTNLGEK, and MTDEEVEQMIREADTDGDGQVNYDEFVIMMKNAERK. Ca(2+) contacts are provided by D20, N22, D24, C26, E31, D56, D58, N60, E67, D93, D95, N97, and E104. K115 is modified (N6,N6,N6-trimethyllysine). Ca(2+) contacts are provided by D129, D131, D133, Q135, and E140.

It belongs to the calmodulin family.

Potential calcium sensor. This is Calmodulin-like protein 4 (CML4) from Oryza sativa subsp. japonica (Rice).